We begin with the raw amino-acid sequence, 141 residues long: Large ribosomal subunit protein uL11 (141 aa).

The protein belongs to the universal ribosomal protein uL11 family. As to quaternary structure, part of the ribosomal stalk of the 50S ribosomal subunit. Interacts with L10 and the large rRNA to form the base of the stalk. L10 forms an elongated spine to which L12 dimers bind in a sequential fashion forming a multimeric L10(L12)X complex. Post-translationally, one or more lysine residues are methylated.

Forms part of the ribosomal stalk which helps the ribosome interact with GTP-bound translation factors. The polypeptide is Large ribosomal subunit protein uL11 (Roseiflexus sp. (strain RS-1)).